Consider the following 316-residue polypeptide: Apolipoprotein E (316 aa).

The first 18 residues, 1 to 18 (MKVLWVALVVALLAGCQA), serve as a signal peptide directing secretion. 8 tandem repeats follow at residues 79–100 (VLME…GQLA), 101–122 (PMAQ…ARLG), 123–144 (SDME…AMLG), 145–166 (QSTE…KRLL), 167–188 (RDAD…EGAE), 189–210 (RSVS…SRAA), 211–232 (TLST…QKLH), and 233–254 (GRLE…QQLE). The interval 79 to 254 (VLMEETMKEV…RLDKMRQQLE (176 aa)) is 8 X 22 AA approximate tandem repeats. Met142 bears the Methionine sulfoxide mark. Ser146 carries the post-translational modification Phosphoserine. The interval 157-167 (HLRKLRKRLLR) is LDL and other lipoprotein receptors binding. 161 to 164 (LRKR) serves as a coordination point for heparin. The segment at 209 to 289 (AATLSTQVGQ…SWFEPLVEDM (81 aa)) is lipid-binding and lipoprotein association. Heparin is bound at residue 228-235 (RQKLHGRL). The tract at residues 265 to 316 (SQIRLQAEAFQARLRSWFEPLVEDMQRQWAGLVEKVQLALHLSPTSPPSENH) is homooligomerization. The interval 277-289 (RLRSWFEPLVEDM) is specificity for association with VLDL.

It belongs to the apolipoprotein A1/A4/E family. In terms of assembly, homotetramer. May interact with ABCA1; functionally associated with ABCA1 in the biogenesis of HDLs. May interact with APP/A4 amyloid-beta peptide; the interaction is extremely stable in vitro but its physiological significance is unclear. May interact with MAPT. May interact with MAP2. In the cerebrospinal fluid, interacts with secreted SORL1. Interacts with PMEL; this allows the loading of PMEL luminal fragment on ILVs to induce fibril nucleation. APOE exists as multiple glycosylated and sialylated glycoforms within cells and in plasma. The extent of glycosylation and sialylation are tissue and context specific. In terms of processing, glycated in plasma VLDL. Post-translationally, phosphorylated by FAM20C in the extracellular medium.

It localises to the secreted. It is found in the extracellular space. Its subcellular location is the extracellular matrix. The protein resides in the extracellular vesicle. The protein localises to the endosome. It localises to the multivesicular body. Functionally, APOE is an apolipoprotein, a protein associating with lipid particles, that mainly functions in lipoprotein-mediated lipid transport between organs via the plasma and interstitial fluids. APOE is a core component of plasma lipoproteins and is involved in their production, conversion and clearance. Apolipoproteins are amphipathic molecules that interact both with lipids of the lipoprotein particle core and the aqueous environment of the plasma. As such, APOE associates with chylomicrons, chylomicron remnants, very low density lipoproteins (VLDL) and intermediate density lipoproteins (IDL) but shows a preferential binding to high-density lipoproteins (HDL). It also binds a wide range of cellular receptors including the LDL receptor/LDLR and the very low-density lipoprotein receptor/VLDLR that mediate the cellular uptake of the APOE-containing lipoprotein particles. Finally, APOE also has a heparin-binding activity and binds heparan-sulfate proteoglycans on the surface of cells, a property that supports the capture and the receptor-mediated uptake of APOE-containing lipoproteins by cells. The protein is Apolipoprotein E (APOE) of Ovis aries (Sheep).